A 255-amino-acid polypeptide reads, in one-letter code: Very-long-chain (3R)-3-hydroxyacyl-CoA dehydratase 2 (255 aa).

Topologically, residues 3–42 are cytoplasmic; it reads AAAAATAAAKGNGGGGGRAGAGDASGTRKKKGPGPLATAY. The interval 11–34 is disordered; sequence AKGNGGGGGRAGAGDASGTRKKKG. Positions 13-22 are enriched in gly residues; the sequence is GNGGGGGRAG. Residues 43–61 traverse the membrane as a helical segment; that stretch reads LVIYNVVMTAGWLVIAVGL. Over 62–80 the chain is Lumenal; the sequence is VRAYLAKGSYHSLYYSIEK. Residues 81–98 traverse the membrane as a helical segment; that stretch reads PLKFFQTGALLEILHCAI. The Cytoplasmic portion of the chain corresponds to 99 to 108; it reads GIVPSSVVLT. Residues 109–126 traverse the membrane as a helical segment; it reads SFQVMSRVFLIWAVTHSV. Topologically, residues 127–131 are lumenal; sequence KEVQS. Residues 132 to 147 traverse the membrane as a helical segment; it reads EDSVLLFVIAWTITEI. The Cytoplasmic segment spans residues 148–170; the sequence is IRYSFYTFSLLNHLPYLIKWARY. A helical transmembrane segment spans residues 171 to 188; sequence TLFIVLYPMGVSGELLTI. Catalysis depends on residues tyrosine 177 and glutamate 184. Residues 189–218 lie on the Lumenal side of the membrane; the sequence is YAALPFVRQAGLYSISLPNKYNFSFDYYAF. Residues 199–215 are may be involved in interaction with TECR; it reads GLYSISLPNKYNFSFDY. N-linked (GlcNAc...) asparagine glycosylation is present at asparagine 210. Residues 219–236 traverse the membrane as a helical segment; it reads LILIMISYIPIFPQLYFH. The Cytoplasmic portion of the chain corresponds to 237–255; the sequence is MIHQRRKILSHTEEHKKFE.

Belongs to the very long-chain fatty acids dehydratase HACD family. As to quaternary structure, may interact with enzymes of the ELO family (including ELOVL1); with those enzymes that mediate condensation, the first of the four steps of the reaction cycle responsible for fatty acids elongation, may be part of a larger fatty acids elongase complex. Interacts with BCAP31. Interacts (via the third lumenal loop) with TECR.

It localises to the endoplasmic reticulum membrane. It catalyses the reaction a very-long-chain (3R)-3-hydroxyacyl-CoA = a very-long-chain (2E)-enoyl-CoA + H2O. The enzyme catalyses (3R)-hydroxyhexadecanoyl-CoA = (2E)-hexadecenoyl-CoA + H2O. It carries out the reaction (3R)-hydroxyoctadecanoyl-CoA = (2E)-octadecenoyl-CoA + H2O. The catalysed reaction is (3R)-hydroxyeicosanoyl-CoA = (2E)-eicosenoyl-CoA + H2O. It catalyses the reaction (3R)-hydroxydocosanoyl-CoA = (2E)-docosenoyl-CoA + H2O. The enzyme catalyses (3R)-hydroxytetracosanoyl-CoA = (2E)-tetracosenoyl-CoA + H2O. It carries out the reaction (3R)-hydroxyhexacosanoyl-CoA = (2E)-hexacosenoyl-CoA + H2O. The protein operates within lipid metabolism; fatty acid biosynthesis. Functionally, catalyzes the third of the very long-chain fatty acids (VLCFA) elongation four-step cycle (condensation, reduction, dehydration, and reduction). This endoplasmic reticulum-elongation process is characterized by the addition of two carbons to the lipid chain through each cycle. This enzyme catalyzes the dehydration of the 3-hydroxyacyl-CoA intermediate into trans-2,3-enoyl-CoA, within each cycle of elongation. Therefore, it participates in the production of various VLCFAs involved in multiple biological processes as precursors of membrane lipids and lipid mediators. In Pongo abelii (Sumatran orangutan), this protein is Very-long-chain (3R)-3-hydroxyacyl-CoA dehydratase 2.